A 446-amino-acid polypeptide reads, in one-letter code: Alkylglycerol monooxygenase (446 aa).

2 helical membrane-spanning segments follow: residues 39-59 (VNQA…LGWL) and 103-123 (FHFL…FLGV). A Fatty acid hydroxylase domain is found at 117-248 (WLAFLGVDMG…LIIWDRMFGT (132 aa)). Residues 131-135 (HRFAH) carry the Histidine box-1 motif. The Histidine box-2 signature appears at 144–148 (HQVHH). The helical transmembrane segment at 167–187 (FSSWIFYSPLALLIPPSVFAV) threads the bilayer. A Histidine box-3 motif is present at residues 220 to 224 (HRVHH). Transmembrane regions (helical) follow at residues 329–349 (AWSP…LDVY), 362–382 (LTVI…GFLI), and 410–430 (PLLP…TIYW).

This sequence belongs to the sterol desaturase family. TMEM195 subfamily. It depends on Fe cation as a cofactor.

It localises to the endoplasmic reticulum membrane. It carries out the reaction 1-O-(1,2-saturated-alkyl)-sn-glycerol + (6R)-L-erythro-5,6,7,8-tetrahydrobiopterin + O2 = a 1-(1-hydroxyalkyl)-sn-glycerol + (6R)-L-erythro-6,7-dihydrobiopterin + H2O. In terms of biological role, glyceryl-ether monooxygenase that cleaves the O-alkyl bond of ether lipids. Ether lipids are essential components of brain membranes. The sequence is that of Alkylglycerol monooxygenase (agmo) from Danio rerio (Zebrafish).